Here is a 485-residue protein sequence, read N- to C-terminus: Cysteine--tRNA ligase (485 aa).

Cys27 provides a ligand contact to Zn(2+). The 'HIGH' region signature appears at 29–39 (ITAYDLCHIGH). Zn(2+)-binding residues include Cys208, His233, and Glu237. The 'KMSKS' region signature appears at 265–269 (KMSKS). An ATP-binding site is contributed by Lys268.

It belongs to the class-I aminoacyl-tRNA synthetase family. In terms of assembly, monomer. Zn(2+) is required as a cofactor.

The protein resides in the cytoplasm. The enzyme catalyses tRNA(Cys) + L-cysteine + ATP = L-cysteinyl-tRNA(Cys) + AMP + diphosphate. The protein is Cysteine--tRNA ligase of Maridesulfovibrio salexigens (strain ATCC 14822 / DSM 2638 / NCIMB 8403 / VKM B-1763) (Desulfovibrio salexigens).